The primary structure comprises 141 residues: Hemoglobin subunit alpha-1/2 (141 aa).

In terms of domain architecture, Globin spans 1–141; sequence VLSPADKTNV…VSTVLTSKYR (141 aa). The residue at position 3 (S3) is a Phosphoserine. K7 is modified (N6-succinyllysine). The residue at position 8 (T8) is a Phosphothreonine. K11 bears the N6-succinyllysine mark. K16 bears the N6-acetyllysine; alternate mark. Residue K16 is modified to N6-succinyllysine; alternate. The residue at position 24 (Y24) is a Phosphotyrosine. S35 is modified (phosphoserine). The residue at position 40 (K40) is an N6-succinyllysine. The residue at position 49 (S49) is a Phosphoserine. O2 is bound at residue H58. Residue H87 coordinates heme b. S102 carries the post-translational modification Phosphoserine. A Phosphothreonine modification is found at T108. Position 124 is a phosphoserine (S124). A phosphothreonine mark is found at T134 and T137. The residue at position 138 (S138) is a Phosphoserine.

This sequence belongs to the globin family. In terms of assembly, heterotetramer of two alpha chains and two beta chains. In terms of tissue distribution, red blood cells.

Its function is as follows. Involved in oxygen transport from the lung to the various peripheral tissues. The protein is Hemoglobin subunit alpha-1/2 of Mustela lutreola (European mink).